Here is a 137-residue protein sequence, read N- to C-terminus: Putative pre-16S rRNA nuclease (137 aa).

It belongs to the YqgF nuclease family.

The protein localises to the cytoplasm. Its function is as follows. Could be a nuclease involved in processing of the 5'-end of pre-16S rRNA. The chain is Putative pre-16S rRNA nuclease from Clostridium botulinum (strain 657 / Type Ba4).